Here is a 757-residue protein sequence, read N- to C-terminus: MDVNPTLLFLKVPAQNAISTTFPYTGDPPYSHGTGTGYTMDTVNRTHQYSEKGKWTTNTETGAPQLNPIDGPLPEDNEPSGYAQTDCVLEAMAFLEESHPGIFENSCLETMEVVQQTRVDKLTQGRQTYDWTLNRNQPAATALANTIEVFRSNDLTANESGRLIDFLKDVMESMDKEEMEITTHFQRKRRVRDNMTKKMITQRTIGKKKQRLNKRSYLIRALTLNTMTKDAERGKLKRRAIATPGMQIRGFVYFVETLARSICEKLEQSGLPVGGNEKKAKLANVVRKMMTNSQDTELSFTITGDNTKWNENQNPRMFLAMITYITRNQPEWFRNVLSIAPIMFSNKMARLGKGYMFESKSMKLRTQIPAEMLASIDLKYFNESTRKKIEKIRPLLIDGTASLSPGMMMGMFNMLSTVLGVSILNLGQKRYTKTTYWWDGLQSSDDFALIVNAPNHEGIQAGVDRFYRTCKLVGINMSKKKSYINRTGTFEFTSFFYRYGFVANFSMELPSFGVSGINESADMSIGVTVIKNNMINNDLGPATAQMALQLFIKDYRYTYRCHRGDTQIQTRRSFELKRLWEQTRSKAGLLVSDGGPNLYNIRNLHIPEVCLKWELMDEEYQGRLCNPLNPFISHKEIESVNNAVVMPAHGPAKSMEYDAFATTHSWIPKRNRSILNTSQRGILEDEQMYQKCCNLFEKFFPSSSYRRPVGISSMVEAMVSRARIDARIDFESGRIKKEEFAEIMKICSTIEELRRQK.

Positions 50–82 (SEKGKWTTNTETGAPQLNPIDGPLPEDNEPSGY) are disordered. The segment covering 55–64 (WTTNTETGAP) has biased composition (polar residues). 2 short sequence motifs (nuclear localization signal) span residues 187–195 (RKRRVRDNM) and 203–216 (RTIG…NKRS). The tract at residues 249-256 (RGFVYFVE) is promoter-binding site. The RdRp catalytic domain occupies 286–483 (VRKMMTNSQD…GINMSKKKSY (198 aa)).

This sequence belongs to the influenza viruses polymerase PB1 family. As to quaternary structure, influenza RNA polymerase is composed of three subunits: PB1, PB2 and PA. Interacts (via N-terminus) with PA (via C-terminus). Interacts (via C-terminus) with PB2 (via N-terminus); this interaction is essential for transcription initiation. In terms of processing, phosphorylated by host PRKCA.

The protein resides in the host nucleus. The protein localises to the host cytoplasm. It catalyses the reaction RNA(n) + a ribonucleoside 5'-triphosphate = RNA(n+1) + diphosphate. RNA-dependent RNA polymerase which is responsible for replication and transcription of virus RNA segments. The transcription of viral mRNAs occurs by a unique mechanism called cap-snatching. 5' methylated caps of cellular mRNAs are cleaved after 10-13 nucleotides by PA. In turn, these short capped RNAs are used as primers by PB1 for transcription of viral mRNAs. During virus replication, PB1 initiates RNA synthesis and copy vRNA into complementary RNA (cRNA) which in turn serves as a template for the production of more vRNAs. In Influenza A virus (strain A/Duck/Germany/1949 H10N7), this protein is RNA-directed RNA polymerase catalytic subunit.